Consider the following 184-residue polypeptide: Protein YrdA (184 aa).

The protein belongs to the gamma-class carbonic anhydrase family.

The polypeptide is Protein YrdA (yrdA) (Escherichia coli (strain K12)).